The following is a 327-amino-acid chain: Ribosomal RNA small subunit methyltransferase H (327 aa).

Residues 36–38, aspartate 61, phenylalanine 88, aspartate 114, and glutamine 121 contribute to the S-adenosyl-L-methionine site; that span reads GGH.

It belongs to the methyltransferase superfamily. RsmH family.

Its subcellular location is the cytoplasm. It catalyses the reaction cytidine(1402) in 16S rRNA + S-adenosyl-L-methionine = N(4)-methylcytidine(1402) in 16S rRNA + S-adenosyl-L-homocysteine + H(+). Its function is as follows. Specifically methylates the N4 position of cytidine in position 1402 (C1402) of 16S rRNA. This chain is Ribosomal RNA small subunit methyltransferase H, found in Chlorobium luteolum (strain DSM 273 / BCRC 81028 / 2530) (Pelodictyon luteolum).